Reading from the N-terminus, the 83-residue chain is U5-theraphotoxin-Hs1d (83 aa).

Residues 1–21 (MKTSMFLTLTGLVLLFVVCYA) form the signal peptide. Residues 22-49 (SESEEKEFPKELLSSIFAADSDFKVEER) constitute a propeptide that is removed on maturation. Intrachain disulfides connect Cys-51-Cys-63, Cys-56-Cys-68, and Cys-62-Cys-75.

The protein belongs to the neurotoxin 10 (Hwtx-1) family. 51 (Hntx-8) subfamily. Hntx-8 sub-subfamily. In terms of tissue distribution, expressed by the venom gland.

Its subcellular location is the secreted. Agglutinates erythrocytes. This chain is U5-theraphotoxin-Hs1d, found in Cyriopagopus schmidti (Chinese bird spider).